A 585-amino-acid polypeptide reads, in one-letter code: MSLLRWMGMNSPGSTDRRKSTWEAELPKPSIRPETLTDRFYGLTNYGNTCYVSSVLVSLYHLKPFRDSLNSYPLPSAPPNFKSVCTKTNHPESSSSRHSKKKSMENRKSSLYGSNGINSCGCVDISNVGSESGTKHQIVVGESNCSAYGMKENIYTCLKDLYCSVSCCDCRYGICSPERFIQVLRRDNEAFRSTQQQDAHEFFNFLLNSVTETLDEYYGNHSDVMHPKWVHSLFEGTLTSETKCLTCENITSRDESFLDLSIDIENHTSVTSCLRSFSASEMLSSKNKFHCDVCKSLQEAEKRMKIKKLPKILSLHLKRFKYNETQEGHDKLFYTIVFTNEMRLFTTTEDAENAERMYYLSSVIVHVGGGPHRGHYVSIVRTKTYGWVLFDDENVTPVNENYLQRFFGDQPGQATAYVLFYTAADEEDDDVSEVDTKESIKPMSIPSQLKQESVEVSNLSSTPRSNSTITYPDMDPMVASFSSQYSHKTLDRDINSRSYFDREPSLDAERFHSRSVDASPKAVRRESRSFFPSLTRKRSKFFGSSQSNSPKDSPLRDTHKSSDEHSESKHSHTLPWQFSRSRSKR.

The disordered stretch occupies residues 1-23 (MSLLRWMGMNSPGSTDRRKSTWE). The region spanning 41–424 (YGLTNYGNTC…TAYVLFYTAA (384 aa)) is the USP domain. Catalysis depends on C50, which acts as the Nucleophile. Residues 85–110 (CTKTNHPESSSSRHSKKKSMENRKSS) form a disordered region. H375 acts as the Proton acceptor in catalysis. Residues 447–470 (SQLKQESVEVSNLSSTPRSNSTIT) show a composition bias toward polar residues. The segment at 447–473 (SQLKQESVEVSNLSSTPRSNSTITYPD) is disordered. Phosphoserine is present on S505. Disordered regions lie at residues 511–530 (FHSRSVDASPKAVRRESRSF) and 540–585 (KFFG…RSKR). A compositionally biased stretch (polar residues) spans 542–551 (FGSSQSNSPK). S549 carries the post-translational modification Phosphoserine. The segment covering 553-570 (SPLRDTHKSSDEHSESKH) has biased composition (basic and acidic residues). Residues 574–585 (LPWQFSRSRSKR) are compositionally biased toward polar residues.

The protein belongs to the peptidase C19 family. As to quaternary structure, interacts with bun107 and bun62.

It is found in the nucleus. It localises to the cytoplasm. The protein localises to the cell tip. It catalyses the reaction Thiol-dependent hydrolysis of ester, thioester, amide, peptide and isopeptide bonds formed by the C-terminal Gly of ubiquitin (a 76-residue protein attached to proteins as an intracellular targeting signal).. In terms of biological role, ubiquitin C-terminal hydrolase involved in regulating actin dynamics and/or endocytosis at cell tips and septa. This chain is Probable ubiquitin carboxyl-terminal hydrolase 9 (ubp9), found in Schizosaccharomyces pombe (strain 972 / ATCC 24843) (Fission yeast).